A 747-amino-acid polypeptide reads, in one-letter code: Polyribonucleotide nucleotidyltransferase (747 aa).

Asp-493 and Asp-499 together coordinate Mg(2+). The KH domain occupies 560-619 (PRIITLQINPEKIGALIGPGGKTVRGITEATGAQIDIEEDGRVYISTPDAAAAQQAVAMV). An S1 motif domain is found at 629–698 (GDIFLGKVVR…GTGKVSLSRR (70 aa)). Positions 705–747 (TAEDRRAAGAGRGLRDGGGRSGGSDRGGDRGPRGDDRQRPRRR) are disordered. 2 stretches are compositionally biased toward basic and acidic residues: residues 706-722 (AEDR…RDGG) and 730-747 (RGGD…PRRR).

The protein belongs to the polyribonucleotide nucleotidyltransferase family. The cofactor is Mg(2+).

Its subcellular location is the cytoplasm. It carries out the reaction RNA(n+1) + phosphate = RNA(n) + a ribonucleoside 5'-diphosphate. Its function is as follows. Involved in mRNA degradation. Catalyzes the phosphorolysis of single-stranded polyribonucleotides processively in the 3'- to 5'-direction. The chain is Polyribonucleotide nucleotidyltransferase from Roseiflexus sp. (strain RS-1).